Here is a 447-residue protein sequence, read N- to C-terminus: N-succinylarginine dihydrolase (447 aa).

Substrate contacts are provided by residues 19–28 (AGLSFGNEAS), Asn110, and 137–138 (HR). Residue Glu174 is part of the active site. Arg212 is a substrate binding site. His248 is a catalytic residue. 2 residues coordinate substrate: Asp250 and Asn359. Residue Cys365 is the Nucleophile of the active site.

It belongs to the succinylarginine dihydrolase family. As to quaternary structure, homodimer.

It carries out the reaction N(2)-succinyl-L-arginine + 2 H2O + 2 H(+) = N(2)-succinyl-L-ornithine + 2 NH4(+) + CO2. The protein operates within amino-acid degradation; L-arginine degradation via AST pathway; L-glutamate and succinate from L-arginine: step 2/5. Its function is as follows. Catalyzes the hydrolysis of N(2)-succinylarginine into N(2)-succinylornithine, ammonia and CO(2). The sequence is that of N-succinylarginine dihydrolase from Salmonella paratyphi B (strain ATCC BAA-1250 / SPB7).